Consider the following 350-residue polypeptide: Uroporphyrinogen decarboxylase (350 aa).

Residues 28–32 (RQAGR), Phe47, Asp78, Tyr155, Ser210, and His325 contribute to the substrate site.

It belongs to the uroporphyrinogen decarboxylase family. In terms of assembly, homodimer.

The protein localises to the cytoplasm. It carries out the reaction uroporphyrinogen III + 4 H(+) = coproporphyrinogen III + 4 CO2. It participates in porphyrin-containing compound metabolism; protoporphyrin-IX biosynthesis; coproporphyrinogen-III from 5-aminolevulinate: step 4/4. In terms of biological role, catalyzes the decarboxylation of four acetate groups of uroporphyrinogen-III to yield coproporphyrinogen-III. The polypeptide is Uroporphyrinogen decarboxylase (Synechocystis sp. (strain ATCC 27184 / PCC 6803 / Kazusa)).